The sequence spans 220 residues: Probable GTP-binding protein EngB (220 aa).

An EngB-type G domain is found at 26-200 (EGIEIAFAGR…RAKLDEWYAP (175 aa)). GTP-binding positions include 34-41 (GRSNAGKS), 61-65 (GRTQL), 79-82 (DLPG), 146-149 (TKAD), and 179-181 (FSS). Residues S41 and T63 each contribute to the Mg(2+) site.

This sequence belongs to the TRAFAC class TrmE-Era-EngA-EngB-Septin-like GTPase superfamily. EngB GTPase family. Requires Mg(2+) as cofactor.

In terms of biological role, necessary for normal cell division and for the maintenance of normal septation. The chain is Probable GTP-binding protein EngB from Vibrio cholerae serotype O1 (strain ATCC 39315 / El Tor Inaba N16961).